Here is a 453-residue protein sequence, read N- to C-terminus: Ribulose bisphosphate carboxylase large chain (453 aa).

A propeptide spanning residues M1 to S2 is cleaved from the precursor. P3 carries the post-translational modification N-acetylproline. K14 is subject to N6,N6,N6-trimethyllysine. Substrate-binding residues include N123 and T173. The active-site Proton acceptor is K175. K177 is a binding site for substrate. 3 residues coordinate Mg(2+): K201, D203, and E204. An N6-carboxylysine modification is found at K201. H294 functions as the Proton acceptor in the catalytic mechanism. Positions 295, 327, and 379 each coordinate substrate.

Belongs to the RuBisCO large chain family. Type I subfamily. In terms of assembly, heterohexadecamer of 8 large chains and 8 small chains; disulfide-linked. The disulfide link is formed within the large subunit homodimers. Requires Mg(2+) as cofactor. The disulfide bond which can form in the large chain dimeric partners within the hexadecamer appears to be associated with oxidative stress and protein turnover.

The protein resides in the plastid. It is found in the chloroplast. The catalysed reaction is 2 (2R)-3-phosphoglycerate + 2 H(+) = D-ribulose 1,5-bisphosphate + CO2 + H2O. It catalyses the reaction D-ribulose 1,5-bisphosphate + O2 = 2-phosphoglycolate + (2R)-3-phosphoglycerate + 2 H(+). RuBisCO catalyzes two reactions: the carboxylation of D-ribulose 1,5-bisphosphate, the primary event in carbon dioxide fixation, as well as the oxidative fragmentation of the pentose substrate in the photorespiration process. Both reactions occur simultaneously and in competition at the same active site. This is Ribulose bisphosphate carboxylase large chain from Galium parisiense (Wall bedstraw).